Here is a 106-residue protein sequence, read N- to C-terminus: UPF0060 membrane protein Oant_2511 (106 aa).

A run of 4 helical transmembrane segments spans residues 3 to 23 (FAIYAAAALFEIAGCFAFWAW), 30 to 50 (PLWLAPGMVCLALFAYLLTLI), 60 to 80 (AAYGGIYIIASILWIWFAEGA), and 84 to 104 (RWDVVGACTAFAGTCIILFAP).

The protein belongs to the UPF0060 family.

It is found in the cell inner membrane. This is UPF0060 membrane protein Oant_2511 from Brucella anthropi (strain ATCC 49188 / DSM 6882 / CCUG 24695 / JCM 21032 / LMG 3331 / NBRC 15819 / NCTC 12168 / Alc 37) (Ochrobactrum anthropi).